The following is a 325-amino-acid chain: RNA ligase 1 (325 aa).

Mg(2+) is required as a cofactor. The cofactor is Mn(2+). AMPylates itself (auto-AMPylation).

The catalysed reaction is ATP + (ribonucleotide)n-3'-hydroxyl + 5'-phospho-(ribonucleotide)m = (ribonucleotide)n+m + AMP + diphosphate.. Functions as an RNA ligase, in vitro. The ligation reaction entails three nucleotidyl transfer steps. In the first step, the RNA ligase reacts with ATP in the absence of nucleic acid to form a covalent ligase-AMP intermediate and release pyrophosphate. In step 2, the ligase-AMP binds to the nucleic acid and transfers the adenylate to the 5'-PO4 terminus to form an adenylylated intermediate. In step 3, the RNA ligase directs the attack of the 3'-OH on the 5'-phosphoanhydride linkage, resulting in a repaired 3'-5' phosphodiester and release of AMP. Exhibits selectivity for single-stranded RNA substrates and may not have nick-sealing activity on double-stranded DNA-RNA hybrids. May play a role in maintaining RNA integrity under stress conditions, for example in response to reactive oxygen species (ROS). This Rattus norvegicus (Rat) protein is RNA ligase 1.